The primary structure comprises 332 residues: MGSNIDGILRENLTLEELQEWLTSSEGNKLAIDDHIKATQGRVLPLRLLFNEFLRTISHIEQLSDKTPQEKFQLIRSKLQELYGKLHALVRDFQRLQPLFDTMVPFSETSERKFYPKETLGTAVEPVRPLASPSYRRPSNRSSADTPSSNAPTPSAAVVSGAALVAPQVKHQRRPRTNTAKRQPSVSASVVPSANSSGPATIPGATPLMLSGMSPLNMVASPLNGISPSRKPAQPHHQTTPSAALGMQPMQQKQMSIQAKATPSKSGTISSANLTPQSILNMSAFENSAGGVPNSAVPLNQNNNAIMGFPTDIDNIDLNALELGSLNMDLLG.

Disordered regions lie at residues 125 to 206 (EPVR…PGAT) and 221 to 242 (SPLNGISPSRKPAQPHHQTTPS). A compositionally biased stretch (low complexity) spans 132–143 (SPSYRRPSNRSS). A compositionally biased stretch (polar residues) spans 144–153 (ADTPSSNAPT). 2 stretches are compositionally biased toward low complexity: residues 155–166 (SAAVVSGAALVA) and 184–200 (PSVSASVVPSANSSGPA).

The protein belongs to the Mediator complex subunit 3 family. In terms of assembly, component of the Mediator complex.

Its subcellular location is the nucleus. Functionally, component of the Mediator complex, a coactivator involved in regulated gene transcription of nearly all RNA polymerase II-dependent genes. Mediator functions as a bridge to convey information from gene-specific regulatory proteins to the basal RNA polymerase II transcription machinery. Mediator is recruited to promoters by direct interactions with regulatory proteins and serves as a scaffold for the assembly of a functional preinitiation complex with RNA polymerase II and the general transcription factors. This Eremothecium gossypii (strain ATCC 10895 / CBS 109.51 / FGSC 9923 / NRRL Y-1056) (Yeast) protein is Mediator of RNA polymerase II transcription subunit 3 (PGD1).